Here is a 399-residue protein sequence, read N- to C-terminus: Phosphatidate cytidylyltransferase 5, chloroplastic (399 aa).

The N-terminal 26 residues, M1–R26, are a transit peptide targeting the chloroplast. A run of 6 helical transmembrane segments spans residues V123–L143, F187–L207, L217–L237, V266–F286, A309–W329, and L333–T353.

The protein belongs to the CDS family. Requires Mg(2+) as cofactor.

Its subcellular location is the plastid. The protein localises to the chloroplast membrane. It catalyses the reaction a 1,2-diacyl-sn-glycero-3-phosphate + CTP + H(+) = a CDP-1,2-diacyl-sn-glycerol + diphosphate. The protein operates within phospholipid metabolism; CDP-diacylglycerol biosynthesis; CDP-diacylglycerol from sn-glycerol 3-phosphate: step 3/3. Its activity is regulated as follows. Highest activities is obtained at about 30 mM CTP and 2 mM phosphatidic acid (PA). Functionally, may be involved in the synthesis of minor phospholipids and in modulation of IP3-mediated signal transduction. Promotes the biosynthesis of plastidial phosphatidylglycerol (PG) which is required for structure and function of thylakoid membranes and, hence, for photoautotrophic growth. The sequence is that of Phosphatidate cytidylyltransferase 5, chloroplastic from Arabidopsis thaliana (Mouse-ear cress).